The following is a 476-amino-acid chain: Glutamyl-tRNA(Gln) amidotransferase subunit A (476 aa).

Active-site charge relay system residues include Lys-70 and Ser-145. Catalysis depends on Ser-169, which acts as the Acyl-ester intermediate.

The protein belongs to the amidase family. GatA subfamily. Heterotrimer of A, B and C subunits.

The enzyme catalyses L-glutamyl-tRNA(Gln) + L-glutamine + ATP + H2O = L-glutaminyl-tRNA(Gln) + L-glutamate + ADP + phosphate + H(+). Its function is as follows. Allows the formation of correctly charged Gln-tRNA(Gln) through the transamidation of misacylated Glu-tRNA(Gln) in organisms which lack glutaminyl-tRNA synthetase. The reaction takes place in the presence of glutamine and ATP through an activated gamma-phospho-Glu-tRNA(Gln). This is Glutamyl-tRNA(Gln) amidotransferase subunit A from Methanosarcina acetivorans (strain ATCC 35395 / DSM 2834 / JCM 12185 / C2A).